Consider the following 94-residue polypeptide: uncharacterized protein (94 aa).

Positions 1–25 (MRAAIAVLFIALVGLATYHLVMSQA) are cleaved as a signal peptide.

This is an uncharacterized protein from Archaeoglobus fulgidus (strain ATCC 49558 / DSM 4304 / JCM 9628 / NBRC 100126 / VC-16).